The chain runs to 482 residues: Putative metallophosphoesterase F40B5.2 (482 aa).

Transmembrane regions (helical) follow at residues 15–35 (MNLKLKIAIIVIGFIHVSIAI), 129–149 (ALMMLFLFLSHIAMFFYYIFL), 156–176 (IAITSLSFIAAYAHILIFLLI), and 205–225 (CYHILLALILGFIFMFAGLYT). Asp-256, His-258, Asp-288, Asn-319, His-421, and His-423 together coordinate a divalent metal cation.

The protein belongs to the metallophosphoesterase superfamily. LOC643853 family.

It is found in the membrane. The sequence is that of Putative metallophosphoesterase F40B5.2 from Caenorhabditis elegans.